We begin with the raw amino-acid sequence, 460 residues long: Metal cation symporter ZIP8 (460 aa).

Positions 1–22 are cleaved as a signal peptide; the sequence is MAPGRAVAGLLLLAAAGLGGVA. Topologically, residues 23 to 132 are extracellular; it reads EGPGLAFSED…PSHSEVWGYG (110 aa). N-linked (GlcNAc...) asparagine glycans are attached at residues N40 and N88. Residues 133–153 traverse the membrane as a helical segment; it reads FLSVTIINLASLLGLILTPLI. The Cytoplasmic segment spans residues 154–160; the sequence is KKSYFPK. Residues 161-181 traverse the membrane as a helical segment; sequence ILTFFVGLAIGTLFSNAIFQL. At 182–191 the chain is on the extracellular side; it reads IPEAFGFDPK. The helical transmembrane segment at 192-212 threads the bilayer; the sequence is VDSYVEKAVAVFGGFYLLFFF. Topologically, residues 213 to 365 are cytoplasmic; that stretch reads ERMLKMLLKT…LNAGMSTRQA (153 aa). The short motif at 343-348 is the XEXPHE-motif element; it reads EEFPHE. A helical transmembrane segment spans residues 366 to 386; the sequence is LLFNFLSACSCYVGLAFGILV. The Extracellular segment spans residues 387–388; sequence GN. A helical transmembrane segment spans residues 389-409; the sequence is NFAPNIIFALAGGMFLYISLA. At 410–429 the chain is on the cytoplasmic side; it reads DMFPEMNDMLREKVTGRKTD. A helical membrane pass occupies residues 430-450; sequence FTFFMIQNAGMLTGFTAILLI. The Extracellular portion of the chain corresponds to 451–460; it reads TLYAGEIELE.

The protein belongs to the ZIP transporter (TC 2.A.5) family. In terms of assembly, homodimer. In terms of processing, N-glycosylated. N-glycosylation is not required for proper iron and zinc transport. Ubiquitously expressed. Expressed in thymus, placenta, lung, liver, pancreas, salivary gland and, to a lower extent, in spleen, testis, ovary, small intestine, colon, leukocyte, heart. Highest expression is observed in pancreas. Expressed by macrophages (at protein level). Expressed by microvascular capillary endothelial cells that constitute the blood-brain barrier (at protein level).

The protein localises to the cell membrane. It is found in the lysosome membrane. Its subcellular location is the apical cell membrane. It localises to the basolateral cell membrane. The enzyme catalyses Zn(2+)(out) + 2 hydrogencarbonate(out) = Zn(2+)(in) + 2 hydrogencarbonate(in). The catalysed reaction is selenite(out) + Zn(2+)(out) + hydrogencarbonate(out) = selenite(in) + Zn(2+)(in) + hydrogencarbonate(in). It carries out the reaction Mn(2+)(out) + 2 hydrogencarbonate(out) = Mn(2+)(in) + 2 hydrogencarbonate(in). It catalyses the reaction Fe(2+)(out) + 2 hydrogencarbonate(out) = Fe(2+)(in) + 2 hydrogencarbonate(in). The enzyme catalyses Cd(2+)(out) + 2 hydrogencarbonate(out) = Cd(2+)(in) + 2 hydrogencarbonate(in). The catalysed reaction is Co(2+)(out) + 2 hydrogencarbonate(out) = Co(2+)(in) + 2 hydrogencarbonate(in). In terms of biological role, electroneutral divalent metal cation:bicarbonate symporter of the plasma membrane mediating the cellular uptake of zinc and manganese, two divalent metal cations important for development, tissue homeostasis and immunity. Transports an electroneutral complex composed of a divalent metal cation and two bicarbonate anions or alternatively a bicarbonate and a selenite anion. Thereby, it also contributes to the cellular uptake of selenium, an essential trace metal and micronutrient. Also imports cadmium a non-essential metal which is cytotoxic and carcinogenic. May also transport iron and cobalt through membranes. Through zinc import, indirectly regulates the metal-dependent transcription factor MTF1 and the expression of some metalloproteases involved in cartilage catabolism and also probably heart development. Also indirectly regulates the expression of proteins involved in cell morphology and cytoskeleton organization. Indirectly controls innate immune function and inflammatory response by regulating zinc cellular uptake which in turn modulates the expression of genes specific of these processes. Protects, for instance, cells from injury and death at the onset of inflammation. By regulating zinc influx into monocytes also directly modulates their adhesion to endothelial cells and arteries. Reclaims manganese from the bile at the apical membrane of hepatocytes, thereby regulating the activity of the manganese-dependent enzymes through the systemic levels of the nutrient. Also participates in manganese reabsorption in the proximal tubule of the kidney. By mediating the extracellular uptake of manganese by cells of the blood-brain barrier, may also play a role in the transport of the micronutrient to the brain. With manganese cellular uptake also participates in mitochondrial proper function. Finally, also probably functions intracellularly, translocating zinc from lysosome to cytosol to indirectly enhance the expression of specific genes during TCR-mediated T cell activation. This is Metal cation symporter ZIP8 from Homo sapiens (Human).